Here is a 643-residue protein sequence, read N- to C-terminus: 1-deoxy-D-xylulose-5-phosphate synthase (643 aa).

Residues histidine 72 and 113-115 (GHA) each bind thiamine diphosphate. Aspartate 144 lines the Mg(2+) pocket. Residues 145-146 (GA), asparagine 174, tyrosine 287, and glutamate 370 each bind thiamine diphosphate. Asparagine 174 serves as a coordination point for Mg(2+).

It belongs to the transketolase family. DXPS subfamily. In terms of assembly, homodimer. It depends on Mg(2+) as a cofactor. Thiamine diphosphate is required as a cofactor.

It catalyses the reaction D-glyceraldehyde 3-phosphate + pyruvate + H(+) = 1-deoxy-D-xylulose 5-phosphate + CO2. Its pathway is metabolic intermediate biosynthesis; 1-deoxy-D-xylulose 5-phosphate biosynthesis; 1-deoxy-D-xylulose 5-phosphate from D-glyceraldehyde 3-phosphate and pyruvate: step 1/1. In terms of biological role, catalyzes the acyloin condensation reaction between C atoms 2 and 3 of pyruvate and glyceraldehyde 3-phosphate to yield 1-deoxy-D-xylulose-5-phosphate (DXP). In Parasynechococcus marenigrum (strain WH8102), this protein is 1-deoxy-D-xylulose-5-phosphate synthase.